A 246-amino-acid chain; its full sequence is Purine nucleoside phosphorylase Cgl2154/cg2365 (246 aa).

Positions 68, 107, and 124 each coordinate Zn(2+).

Belongs to the purine nucleoside phosphorylase YfiH/LACC1 family. Homodimer. Requires Cu(2+) as cofactor. The cofactor is Zn(2+).

The catalysed reaction is adenosine + phosphate = alpha-D-ribose 1-phosphate + adenine. It carries out the reaction S-methyl-5'-thioadenosine + phosphate = 5-(methylsulfanyl)-alpha-D-ribose 1-phosphate + adenine. It catalyses the reaction inosine + phosphate = alpha-D-ribose 1-phosphate + hypoxanthine. The enzyme catalyses adenosine + H2O + H(+) = inosine + NH4(+). Its function is as follows. Purine nucleoside enzyme that catalyzes the phosphorolysis of adenosine and inosine nucleosides, yielding D-ribose 1-phosphate and the respective free bases, adenine and hypoxanthine. Also catalyzes the phosphorolysis of S-methyl-5'-thioadenosine into adenine and S-methyl-5-thio-alpha-D-ribose 1-phosphate. Also has adenosine deaminase activity. The protein is Purine nucleoside phosphorylase Cgl2154/cg2365 of Corynebacterium glutamicum (strain ATCC 13032 / DSM 20300 / JCM 1318 / BCRC 11384 / CCUG 27702 / LMG 3730 / NBRC 12168 / NCIMB 10025 / NRRL B-2784 / 534).